The primary structure comprises 490 residues: Betaine aldehyde dehydrogenase (490 aa).

K(+)-binding residues include threonine 26, isoleucine 27, and aspartate 93. Residue glycine 150–tryptophan 152 participates in NAD(+) binding. Residue lysine 162 is the Charge relay system of the active site. Lysine 176–glutamate 179 lines the NAD(+) pocket. Residue valine 180 coordinates K(+). Glycine 230–serine 233 contacts NAD(+). Residue leucine 246 coordinates K(+). Glutamate 252 acts as the Proton acceptor in catalysis. The NAD(+) site is built by glycine 254, cysteine 286, and glutamate 387. Cysteine 286 (nucleophile) is an active-site residue. Cysteine 286 carries the cysteine sulfenic acid (-SOH) modification. K(+)-binding residues include lysine 457 and glycine 460. Glutamate 464 serves as the catalytic Charge relay system.

This sequence belongs to the aldehyde dehydrogenase family. Dimer of dimers. K(+) serves as cofactor.

The catalysed reaction is betaine aldehyde + NAD(+) + H2O = glycine betaine + NADH + 2 H(+). It participates in amine and polyamine biosynthesis; betaine biosynthesis via choline pathway; betaine from betaine aldehyde: step 1/1. Its function is as follows. Involved in the biosynthesis of the osmoprotectant glycine betaine. Catalyzes the irreversible oxidation of betaine aldehyde to the corresponding acid. The sequence is that of Betaine aldehyde dehydrogenase from Escherichia coli O8 (strain IAI1).